A 415-amino-acid polypeptide reads, in one-letter code: MEPIWLLLLLAIFTVSVSAQFNGYNCDANQHSRFPAERDITVYCGVQTITMKINFCTVLFSGYSESDLSLNGKHGDAHCRGFINNNTFPAVVIFTINLSTLESCENSLVVSTVPGVNAYGIASMVQIGNISGYIDTPDPPTIISYLPGLLYKFSCSYPLEYLVNNTQLASSSAAISVREGNGTFISTLNLLLYNDSTYSQQLLIPSAGLPLKTKIYAAVRATNLDGRWNVLMDYCYTTPSGNPSDDIRYDLFLSCDKDPQTTIFENGKSQMGRFSFEVFRFVKHKNQKMSTVFLHCITKLCRSDDCHYLTPTCHNRDRRDAVIRTTLTPYSLSGNAVVSAGPIITRSDETPANNSQLAHPGNQQFQINSVTSALISGVVILGATSLSFFIIALTLLNRKKQNSLVLCGIRNPVFN.

The signal sequence occupies residues 1–19; sequence MEPIWLLLLLAIFTVSVSA. Residues 20 to 372 are Extracellular-facing; sequence QFNGYNCDAN…QQFQINSVTS (353 aa). The ZP domain occupies 43–320; that stretch reads YCGVQTITMK…PTCHNRDRRD (278 aa). Disulfide bonds link C44–C155, C79–C104, C235–C296, and C255–C313. Residues 373–393 form a helical membrane-spanning segment; that stretch reads ALISGVVILGATSLSFFIIAL. Over 394-415 the chain is Cytoplasmic; that stretch reads TLLNRKKQNSLVLCGIRNPVFN.

Proteolytically cleaved before the transmembrane segment to yield the secreted form found in the extracellular matrix of the cupula.

The protein localises to the cytoplasmic vesicle membrane. It localises to the secreted. The protein resides in the extracellular space. It is found in the extracellular matrix. Glycoprotein which is a component of the gelatinous extracellular matrix in the cupulae of the vestibular organ. The sequence is that of Zona pellucida-like domain-containing protein 1 (zpld1) from Xenopus laevis (African clawed frog).